The following is a 345-amino-acid chain: Adenine deaminase (345 aa).

The Zn(2+) site is built by H24, H26, and H204. E207 functions as the Proton donor in the catalytic mechanism. D285 contributes to the Zn(2+) binding site. Position 286 (D286) interacts with substrate.

This sequence belongs to the metallo-dependent hydrolases superfamily. Adenosine and AMP deaminases family. Adenine deaminase type 2 subfamily. It depends on Zn(2+) as a cofactor.

It catalyses the reaction adenine + H2O + H(+) = hypoxanthine + NH4(+). Catalyzes the hydrolytic deamination of adenine to hypoxanthine. Plays an important role in the purine salvage pathway and in nitrogen catabolism. The protein is Adenine deaminase of Albidiferax ferrireducens (strain ATCC BAA-621 / DSM 15236 / T118) (Rhodoferax ferrireducens).